A 174-amino-acid chain; its full sequence is dCTP deaminase, dUMP-forming (174 aa).

Residues 93-98, Asp-111, 119-121, Gln-138, and Tyr-151 contribute to the dCTP site; these read RSSIGR and TLE. The active-site Proton donor/acceptor is the Glu-121.

It belongs to the dCTP deaminase family. In terms of assembly, homotrimer.

The catalysed reaction is dCTP + 2 H2O = dUMP + NH4(+) + diphosphate. Its pathway is pyrimidine metabolism; dUMP biosynthesis; dUMP from dCTP: step 1/1. Bifunctional enzyme that catalyzes both the deamination of dCTP to dUTP and the hydrolysis of dUTP to dUMP without releasing the toxic dUTP intermediate. This chain is dCTP deaminase, dUMP-forming, found in Leptospira biflexa serovar Patoc (strain Patoc 1 / Ames).